The primary structure comprises 96 residues: DNA-directed RNA polymerase subunit Rpo11 (96 aa).

It belongs to the archaeal Rpo11/eukaryotic RPB11/RPC19 RNA polymerase subunit family. In terms of assembly, part of the RNA polymerase complex.

It localises to the cytoplasm. The catalysed reaction is RNA(n) + a ribonucleoside 5'-triphosphate = RNA(n+1) + diphosphate. Functionally, DNA-dependent RNA polymerase (RNAP) catalyzes the transcription of DNA into RNA using the four ribonucleoside triphosphates as substrates. The protein is DNA-directed RNA polymerase subunit Rpo11 of Methanococcus maripaludis (strain C6 / ATCC BAA-1332).